A 437-amino-acid polypeptide reads, in one-letter code: Rhoptry apical surface protein 2 (437 aa).

One can recognise a C2 domain in the interval 45 to 179 (GCLGSLFFYL…PRINLSLHKL (135 aa)). The PH domain occupies 230 to 338 (EGPLERLNAN…FIEKLRAYRE (109 aa)). A disordered region spans residues 341 to 437 (STRVPSQKGA…SVVGDEEPQT (97 aa)). The span at 375-384 (RKSGGKKSRR) shows a compositional bias: basic residues.

In terms of assembly, interacts with RASP1. Interacts with RASP3.

The protein resides in the cytoplasmic vesicle. The protein localises to the secretory vesicle. It localises to the rhoptry membrane. Its function is as follows. Essential for tachyzoite invasion of host cells by controlling rhoptry secretion. Binds to phosphatidic acid (PA) and phosphatidylinositol 4,5-bisphosphate (PIP2) lipids and thus, likely contributes to the assembly of the machinery that docks or primes the rhoptry to the parasite cell membrane prior to the fusion with the host cell membrane. The sequence is that of Rhoptry apical surface protein 2 from Toxoplasma gondii (strain ATCC 50853 / GT1).